Reading from the N-terminus, the 109-residue chain is MFGKGGMGNLMKQAQMMQERMAKMQEEIARMEMVGESGAGLVKVTMTGAHTVRKVEIYPSLMEDDKEMLEDLIAAACNDAARIIEENQKAKMAEVTGGMQLPPGMKMPF.

The protein belongs to the YbaB/EbfC family. In terms of assembly, homodimer.

It localises to the cytoplasm. The protein localises to the nucleoid. Its function is as follows. Binds to DNA and alters its conformation. May be involved in regulation of gene expression, nucleoid organization and DNA protection. The sequence is that of Nucleoid-associated protein SO_2014 from Shewanella oneidensis (strain ATCC 700550 / JCM 31522 / CIP 106686 / LMG 19005 / NCIMB 14063 / MR-1).